We begin with the raw amino-acid sequence, 778 residues long: Kin of IRRE-like protein 3 (778 aa).

The N-terminal stretch at 1–21 is a signal peptide; it reads MKPFQLDLLFVCFFLFSQELG. Over 22-535 the chain is Extracellular; the sequence is LQKRGCCLVL…GLEAESVPMA (514 aa). 5 consecutive Ig-like C2-type domains span residues 48–142, 147–243, 249–330, 335–415, and 419–515; these read YSFS…ARLT, PDDP…TSVT, PPLV…RTVD, PRMT…VTLT, and PPII…IRLK. Cysteines 69 and 127 form a disulfide. N-linked (GlcNAc...) asparagine glycosylation is present at Asn-167. Cysteines 170 and 227 form a disulfide. N-linked (GlcNAc...) asparagine glycosylation occurs at Asn-253. A disulfide bond links Cys-271 and Cys-314. Asn-324 carries N-linked (GlcNAc...) asparagine glycosylation. Cystine bridges form between Cys-356/Cys-398 and Cys-440/Cys-499. An N-linked (GlcNAc...) asparagine glycan is attached at Asn-498. A helical membrane pass occupies residues 536–556; sequence VIIGVAVGAGVAFLVLMATIV. At 557–778 the chain is on the cytoplasmic side; sequence AFCCARSQRN…PLQRRMQTHV (222 aa). The segment covering 727–736 has biased composition (polar residues); that stretch reads CDSSVSSSGK. The interval 727–778 is disordered; the sequence is CDSSVSSSGKQDGYVQFDKASKASASSSHHSQSSSQNSDPSRPLQRRMQTHV. Over residues 748–762 the composition is skewed to low complexity; that stretch reads KASASSSHHSQSSSQ.

Belongs to the immunoglobulin superfamily. In terms of assembly, homodimer; mediates homophilic interactions to promote cell adhesion. Interacts with NPHS1; forms heterodimers with NPHS1. Interacts with NPHS2/podocin (via the C-terminus). Interacts with CASK. Interacts (via extracellular region) with MAP1B. Interacts (via extracellular region) with MYO16. Interacts (via intracellular region) with ATP1B1. Interacts (via intracellular region) with SHMT2. Interacts (via intracellular region) with UFC1. Undergoes proteolysis by a metalloprotease and gives rise to a soluble form. Expressed in fetal and adult brain. Also expressed in kidney, specifically in podocytes of kidney glomeruli. Also expressed in skeletal muscle.

The protein localises to the cell membrane. It is found in the secreted. Its function is as follows. Synaptic adhesion molecule required for the formation of target-specific synapses. Required for formation of target-specific synapses at hippocampal mossy fiber synapses. Required for formation of mossy fiber filopodia, the synaptic structures connecting dentate granule and GABA neurons. Probably acts as a homophilic adhesion molecule that promotes trans-cellular interactions and stabilize mossy fiber filipodia contact and subsequent synapse formation. Required for the coalescence of vomeronasal sensory neuron axons. May be involved in the hematopoietic supportive capacity of stroma cells; the secreted extracellular domain is directly responsible for supporting hematopoietic stem cells. The chain is Kin of IRRE-like protein 3 from Homo sapiens (Human).